The chain runs to 397 residues: MSLGKDRYSLPRSYKRVSHAKEKARPELRKFGWDTLGYAESFNPPPLKDTIPRVDGKKISVDEFRRDFERPRIPVILTGLTDDWNAHEKWTLERLSKKYRNQNFKCGEDDHGNSVRMKMKYYHDYMLNNRDDSPLYIFDSSFAERRKTKKLSEDYKVPKFFEDDLFHYADHKKRPPHRWFVMGPARSGTAIHIDPLGTSAWNSLLLGYKRWVLIPPNAPRDLVKPMAHEKGKHPDEGITWFQTVYKRVRSPAWPKEYAPIECRQGPGETMFVPSGWWHVVINEGLTVAVTHNYCSVENLHLVWPKTVRGRPKLSKHWHRKLAESRPEVLKIINSCTDTPPQSLNDSSSDSSSSSSSSDDSSDSETEEDSGRCGLGNRKRRNDVCTSECPEKISNSMV.

Residues 146–310 (RKTKKLSEDY…LVWPKTVRGR (165 aa)) form the JmjC domain. Thr189 is a binding site for substrate. Residues His192 and Asp194 each coordinate Fe cation. Asn202 contacts 2-oxoglutarate. A substrate-binding site is contributed by Lys209. Residue His278 coordinates Fe cation. Thr290 serves as a coordination point for 2-oxoglutarate. Residues 334–344 (SCTDTPPQSLN) show a composition bias toward polar residues. Residues 334–383 (SCTDTPPQSLNDSSSDSSSSSSSSDDSSDSETEEDSGRCGLGNRKRRNDV) are disordered. Low complexity predominate over residues 345 to 358 (DSSSDSSSSSSSSD).

This sequence belongs to the JMJD6 family. As to quaternary structure, interacts with ced-5 and ced-12. The cofactor is Fe(2+).

Its subcellular location is the nucleus. Functionally, dioxygenase that can both act as a histone arginine demethylase and a lysyl-hydroxylase. The protein is Bifunctional arginine demethylase and lysyl-hydroxylase psr-1 (psr-1) of Caenorhabditis briggsae.